Reading from the N-terminus, the 218-residue chain is Protein GrpE (218 aa).

Basic and acidic residues-rich tracts occupy residues 1 to 13 and 20 to 32; these read MSKNNENIKHQNN and VDKKETKNHNKQE. A disordered region spans residues 1–32; that stretch reads MSKNNENIKHQNNDKVNNQVDKKETKNHNKQE.

It belongs to the GrpE family. Homodimer.

The protein resides in the cytoplasm. Functionally, participates actively in the response to hyperosmotic and heat shock by preventing the aggregation of stress-denatured proteins, in association with DnaK and GrpE. It is the nucleotide exchange factor for DnaK and may function as a thermosensor. Unfolded proteins bind initially to DnaJ; upon interaction with the DnaJ-bound protein, DnaK hydrolyzes its bound ATP, resulting in the formation of a stable complex. GrpE releases ADP from DnaK; ATP binding to DnaK triggers the release of the substrate protein, thus completing the reaction cycle. Several rounds of ATP-dependent interactions between DnaJ, DnaK and GrpE are required for fully efficient folding. The polypeptide is Protein GrpE (Ureaplasma parvum serovar 3 (strain ATCC 27815 / 27 / NCTC 11736)).